Here is a 188-residue protein sequence, read N- to C-terminus: MAENPNVDDLRAPLLAALGAADLALTTVNELVGNMRERAEETRIDTRSRVEESRARVAKLQEVLPEHLSELREKFTADELRKAAEGYLEAATNRYNELVERGEAALERLRSRPVFEDASARAEGYVDQAVELTQEALGTVASQTRAVGGRAAKLVGIELPKKAAAPARKAPAKKAPAKKAPAKKVTQK.

Residues 162-188 (KAAAPARKAPAKKAPAKKAPAKKVTQK) are disordered. The segment covering 170–188 (APAKKAPAKKAPAKKVTQK) has biased composition (basic residues).

To M.tuberculosis HbhA.

In terms of biological role, might mediate adherence to host cells by binding sulfated glycoconjugates. This Mycobacterium leprae (strain TN) protein is Heparin-binding hemagglutinin homolog (hbhA).